We begin with the raw amino-acid sequence, 397 residues long: RNA binding protein fox-1 homolog 1 (397 aa).

The interval 1-121 (MNCEREQLRG…NKSQPKRLHV (121 aa)) is disordered. The span at 70–87 (QTHSEQSPADTSAQTVSG) shows a compositional bias: polar residues. Residues 88-99 (TATQTDDAAPTD) are compositionally biased toward low complexity. The span at 100 to 113 (GQPQTQPSENTENK) shows a compositional bias: polar residues. The 77-residue stretch at 117–193 (KRLHVSNIPF…RKIEVNNATA (77 aa)) folds into the RRM domain. Position 317 is an asymmetric dimethylarginine (Arg-317). Omega-N-methylarginine is present on Arg-388.

As to quaternary structure, binds to the C-terminus of ATXN2. Predominantly expressed in muscle and brain.

The protein localises to the nucleus. It localises to the cytoplasm. RNA-binding protein that regulates alternative splicing events by binding to 5'-UGCAUGU-3' elements. Regulates alternative splicing of tissue-specific exons and of differentially spliced exons during erythropoiesis. The chain is RNA binding protein fox-1 homolog 1 (RBFOX1) from Homo sapiens (Human).